We begin with the raw amino-acid sequence, 645 residues long: Threonine--tRNA ligase (645 aa).

The 62-residue stretch at 1–62 (MSIHITFPDG…VEDGSLEIVT (62 aa)) folds into the TGS domain. The tract at residues 242–541 (DHRKLGKELD…LTEVYKGAFP (300 aa)) is catalytic. Residues Cys336, His387, and His518 each contribute to the Zn(2+) site.

Belongs to the class-II aminoacyl-tRNA synthetase family. In terms of assembly, homodimer. Zn(2+) is required as a cofactor.

Its subcellular location is the cytoplasm. The enzyme catalyses tRNA(Thr) + L-threonine + ATP = L-threonyl-tRNA(Thr) + AMP + diphosphate + H(+). Its function is as follows. Catalyzes the attachment of threonine to tRNA(Thr) in a two-step reaction: L-threonine is first activated by ATP to form Thr-AMP and then transferred to the acceptor end of tRNA(Thr). Also edits incorrectly charged L-seryl-tRNA(Thr). The sequence is that of Threonine--tRNA ligase from Enterococcus faecalis (strain ATCC 700802 / V583).